Consider the following 412-residue polypeptide: MIEAPPFDKSLGMLYYVTDTCPAGGVIKARPEDFIVEEVLKDGTVVALTGISLKPRVGSWTWIHVVKKNTDTLKLLLYLAKTLGLKARDISIGGIKDTRAVTSQIISIRGDVTNLPKIRNVEFLSFWPMDKPITPSLIYGNRFTITLRNVEKVDCAEATLKTLQYIALPNYYGYQRFGTIRPVSHLLGKALVKKDAEEFFDIMFCKIFAYESDVAKKAREAACKGDYRRALEIFPKRFIEERAVLRGLLRGLDLWNAIMSIPIQILRIYVEALQSYLFNLFLSKRMELGPLNRPIEGDLVEINGQVVHYAEGLGGEVVLPTVGVGVKMPRGKVGEAVLQLLKREGVEPSMFLKMPRGLRVYGGYRKVVLTLRDFRYAVDKEVTVSFTLPRGSYATVILREVVKPEEPYRHGF.

Catalysis depends on Asp-97, which acts as the Nucleophile. One can recognise a TRUD domain in the interval 167–370; that stretch reads ALPNYYGYQR…YGGYRKVVLT (204 aa).

This sequence belongs to the pseudouridine synthase TruD family.

The catalysed reaction is uridine(13) in tRNA = pseudouridine(13) in tRNA. In terms of biological role, could be responsible for synthesis of pseudouridine from uracil-13 in transfer RNAs. This is Probable tRNA pseudouridine synthase D from Pyrobaculum islandicum (strain DSM 4184 / JCM 9189 / GEO3).